Here is a 155-residue protein sequence, read N- to C-terminus: MRFLITNEVKSVFNDEIYLQRFEQIANLISIKLNIDKERFFECHFVDEKTIQEINRDYRNKDYITDVISFAFDDGEIITPLLGEMYICYQKVVNQAKEFGHSFERELCFLFTHGLLHLLGYDHIEVEEEKIMFGLQDEILNELNITRNVNGNKNG.

3 residues coordinate Zn(2+): H113, H117, and H123.

This sequence belongs to the endoribonuclease YbeY family. It depends on Zn(2+) as a cofactor.

It is found in the cytoplasm. In terms of biological role, single strand-specific metallo-endoribonuclease involved in late-stage 70S ribosome quality control and in maturation of the 3' terminus of the 16S rRNA. The chain is Endoribonuclease YbeY from Ureaplasma urealyticum serovar 10 (strain ATCC 33699 / Western).